Reading from the N-terminus, the 434-residue chain is T-box transcription factor T homolog (434 aa).

A DNA-binding region (T-box) is located at residues 50 to 220; that stretch reads LWKKFHKLTN…YNPFAKAFLD (171 aa). Composition is skewed to polar residues over residues 355–364 and 376–385; these read SGFSHVSSPQ and HPTSSHQHNL. The interval 355 to 385 is disordered; the sequence is SGFSHVSSPQSPLPTGLFRNPHPTSSHQHNL.

As to expression, in the developing embryo, expressed in the mesenchyme founder cells, vegetal plate of the mesenchyme blastula, extending tip of the invaginating archenteron and, later, in the secondary mesenchyme cells.

The protein localises to the nucleus. Functionally, involved in the transcriptional regulation of genes required for mesoderm differentiation. This Hemicentrotus pulcherrimus (Sea urchin) protein is T-box transcription factor T homolog.